Consider the following 372-residue polypeptide: NAD(P)H-quinone oxidoreductase subunit 1 (372 aa).

8 helical membrane passes run 27–47, 97–117, 128–148, 166–186, 204–224, 266–286, 308–328, and 347–367; these read MLWL…GVLV, ILFT…WLIV, VGVG…GLLM, AAQS…VVMM, VLSW…ICAL, VLSA…PIPV, TVGI…AILL, and FLLP…LAFP.

This sequence belongs to the complex I subunit 1 family. As to quaternary structure, NDH-1 is composed of at least 11 different subunits.

The protein localises to the cellular thylakoid membrane. It catalyses the reaction a plastoquinone + NADH + (n+1) H(+)(in) = a plastoquinol + NAD(+) + n H(+)(out). The catalysed reaction is a plastoquinone + NADPH + (n+1) H(+)(in) = a plastoquinol + NADP(+) + n H(+)(out). NDH-1 shuttles electrons from an unknown electron donor, via FMN and iron-sulfur (Fe-S) centers, to quinones in the respiratory and/or the photosynthetic chain. The immediate electron acceptor for the enzyme in this species is believed to be plastoquinone. Couples the redox reaction to proton translocation, and thus conserves the redox energy in a proton gradient. In Synechococcus sp. (strain CC9311), this protein is NAD(P)H-quinone oxidoreductase subunit 1.